We begin with the raw amino-acid sequence, 132 residues long: ATP synthase epsilon chain (132 aa).

Belongs to the ATPase epsilon chain family. In terms of assembly, F-type ATPases have 2 components, CF(1) - the catalytic core - and CF(0) - the membrane proton channel. CF(1) has five subunits: alpha(3), beta(3), gamma(1), delta(1), epsilon(1). CF(0) has three main subunits: a, b and c.

The protein localises to the cell membrane. Functionally, produces ATP from ADP in the presence of a proton gradient across the membrane. The polypeptide is ATP synthase epsilon chain (Desulfitobacterium hafniense (strain Y51)).